We begin with the raw amino-acid sequence, 349 residues long: Probable inactive tRNA-specific adenosine deaminase-like protein 3 (349 aa).

Met1 carries the N-acetylmethionine modification. The interval Met1–Gln25 is disordered. The region spanning Ala171 to Phe334 is the CMP/dCMP-type deaminase domain. Zn(2+)-binding residues include His223, Cys289, and Cys292.

The protein belongs to the cytidine and deoxycytidylate deaminase family. ADAT3 subfamily. Requires Zn(2+) as cofactor.

The protein is Probable inactive tRNA-specific adenosine deaminase-like protein 3 (Adat3) of Rattus norvegicus (Rat).